The chain runs to 229 residues: Cytochrome c oxidase subunit 2 (229 aa).

At 1-26 the chain is on the mitochondrial intermembrane side; it reads MATWAQLNFQDAASPMMEQLHYFHDH. Residues 27-48 traverse the membrane as a helical segment; it reads TMMVLVIITIMVAYIMGTMFFN. Topologically, residues 49–62 are mitochondrial matrix; it reads KDVNRYLLDGQKIE. A helical membrane pass occupies residues 63–82; that stretch reads TEWTIVPVFVLVIIAMPSLR. Topologically, residues 83 to 229 are mitochondrial intermembrane; sequence LLYLLDEVNE…INWIQNMSEA (147 aa). His161, Cys196, Glu198, Cys200, His204, and Met207 together coordinate Cu cation. A Mg(2+)-binding site is contributed by Glu198.

Belongs to the cytochrome c oxidase subunit 2 family. In terms of assembly, component of the cytochrome c oxidase (complex IV, CIV), a multisubunit enzyme composed of a catalytic core of 3 subunits and several supernumerary subunits. The complex exists as a monomer or a dimer and forms supercomplexes (SCs) in the inner mitochondrial membrane with ubiquinol-cytochrome c oxidoreductase (cytochrome b-c1 complex, complex III, CIII). Cu cation serves as cofactor.

The protein localises to the mitochondrion inner membrane. It carries out the reaction 4 Fe(II)-[cytochrome c] + O2 + 8 H(+)(in) = 4 Fe(III)-[cytochrome c] + 2 H2O + 4 H(+)(out). Its function is as follows. Component of the cytochrome c oxidase, the last enzyme in the mitochondrial electron transport chain which drives oxidative phosphorylation. The respiratory chain contains 3 multisubunit complexes succinate dehydrogenase (complex II, CII), ubiquinol-cytochrome c oxidoreductase (cytochrome b-c1 complex, complex III, CIII) and cytochrome c oxidase (complex IV, CIV), that cooperate to transfer electrons derived from NADH and succinate to molecular oxygen, creating an electrochemical gradient over the inner membrane that drives transmembrane transport and the ATP synthase. Cytochrome c oxidase is the component of the respiratory chain that catalyzes the reduction of oxygen to water. Electrons originating from reduced cytochrome c in the intermembrane space (IMS) are transferred via the dinuclear copper A center (CU(A)) of subunit 2 and heme A of subunit 1 to the active site in subunit 1, a binuclear center (BNC) formed by heme A3 and copper B (CU(B)). The BNC reduces molecular oxygen to 2 water molecules using 4 electrons from cytochrome c in the IMS and 4 protons from the mitochondrial matrix. In Sympetrum striolatum (Common darter dragonfly), this protein is Cytochrome c oxidase subunit 2 (COII).